A 1001-amino-acid polypeptide reads, in one-letter code: Receptor-type tyrosine-protein phosphatase N2 (1001 aa).

The signal sequence occupies residues 1-27; the sequence is MGPPLPLLLLLLLPPPLPRALPAPASA. The tract at residues 1–407 is involved in localization to secretory granules; interaction with CPE; that stretch reads MGPPLPLLLL…PEGPLLEKSS (407 aa). The Extracellular segment spans residues 28 to 600; it reads RGRQLPGRLG…HQEEQEDSTK (573 aa). Arg259 carries the omega-N-methylarginine modification. Disordered regions lie at residues 271–296, 308–359, and 394–459; these read PFSA…SMDD, QQNS…DAPE, and SPLL…LEDQ. Positions 312–325 are enriched in basic and acidic residues; that stretch reads EVDRLGPLKEEKAD. At Ser339 the chain carries Phosphoserine. The span at 340–355 shows a compositional bias: basic and acidic residues; sequence QESHGRGAEGQPREQT. Positions 394–404 are enriched in low complexity; the sequence is SPLLPEGPLLE. Positions 405–416 are enriched in basic and acidic residues; it reads KSSREEIKKSEQ. The segment covering 417–428 has biased composition (acidic residues); that stretch reads PEEVLSSEEETA. Residues Ser422 and Ser423 each carry the phosphoserine modification. Residues 429-459 show a composition bias toward basic and acidic residues; sequence GVEHVRSRTYSKDLFERKPNSEPQPRRLEDQ. Asn550 is a glycosylation site (N-linked (GlcNAc...) asparagine). Residues 601 to 621 form a helical membrane-spanning segment; that stretch reads FILLTFLSIACILGVLLASSL. Residues 622–1001 are Cytoplasmic-facing; that stretch reads AYCLRHNSHY…VNAILKALPQ (380 aa). The Tyrosine-based internalization motif signature appears at 652–661; it reads YQELCRQRMA. Positions 663–705 are disordered; that stretch reads RPQDRSEGPHTSRINSVSSQFSDGPMPSPSARSSTSSWSEEPV. Positions 674–684 are enriched in polar residues; that stretch reads SRINSVSSQFS. A phosphoserine mark is found at Ser678 and Ser684. Low complexity predominate over residues 691–705; the sequence is PSARSSTSSWSEEPV. At Thr697 the chain carries Phosphothreonine. In terms of domain architecture, Tyrosine-protein phosphatase spans 731-991; that stretch reads LEKEWEALCA…EFALTAVAEE (261 aa). Substrate is bound by residues Asp899 and 931–937; that span reads CSDGAGR. Cys931 serves as the catalytic Phosphocysteine intermediate. Position 956 is an N6-acetyllysine (Lys956). Gln976 is a binding site for substrate. The short motif at 990–996 is the Leucine-based sorting signal element; the sequence is EEVNAIL.

It belongs to the protein-tyrosine phosphatase family. In terms of assembly, self-associates. Interacts (via cytoplasmic domain) with PTPRN (via cytoplasmic domain). Interacts (precursor form) with CPE. Interacts with HAP1 isoform A. Interacts with AP2A1 or AP2A2 and AP1G1; indicative for an association with adaptor protein complex 2 (AP-2) and adaptor protein complex 1 (AP-1). Interacts with AP2M1; indicative for an association with adaptor protein complex 2 (AP-2). Interacts with MYO5A. Post-translationally, subject to proteolytic cleavage at multiple sites during maturation of secretory granules. In the brain at least IA-2beta71, IA-2beta64 and IA-2beta60 have been detected, in the pancreas and a pancreatic beta cell line only IA-2beta60 has been detected. As to expression, detected in brain. Detected in pancreas islets (at protein level). Detected in pancreas and brain.

Its subcellular location is the cytoplasmic vesicle. The protein resides in the secretory vesicle membrane. It localises to the secretory vesicle. It is found in the synaptic vesicle membrane. The catalysed reaction is O-phospho-L-tyrosyl-[protein] + H2O = L-tyrosyl-[protein] + phosphate. Its function is as follows. Plays a role in vesicle-mediated secretory processes. Required for normal accumulation of secretory vesicles in hippocampus, pituitary and pancreatic islets. Required for the accumulation of normal levels of insulin-containing vesicles and preventing their degradation. Plays a role in insulin secretion in response to glucose stimuli. Required for normal accumulation of the neurotransmitters norepinephrine, dopamine and serotonin in the brain. In females, but not in males, required for normal accumulation and secretion of pituitary hormones, such as luteinizing hormone (LH) and follicle-stimulating hormone (FSH). Required to maintain normal levels of renin expression and renin release. May regulate catalytic active protein-tyrosine phosphatases such as PTPRA through dimerization. Has phosphatidylinositol phosphatase activity; the PIPase activity is involved in its ability to regulate insulin secretion. Can dephosphorylate phosphatidylinositol 4,5-biphosphate (PI(4,5)P2), phosphatidylinositol 5-phosphate and phosphatidylinositol 3-phosphate. Regulates PI(4,5)P2 level in the plasma membrane and localization of cofilin at the plasma membrane and thus is indirectly involved in regulation of actin dynamics related to cell migration and metastasis; upon hydrolysis of PI(4,5)P2 cofilin is released from the plasma membrane and acts in the cytoplasm in severing F-actin filaments. This is Receptor-type tyrosine-protein phosphatase N2 (Ptprn2) from Mus musculus (Mouse).